Reading from the N-terminus, the 224-residue chain is Germin-like protein 8-10 (224 aa).

An N-terminal signal peptide occupies residues 1 to 22; sequence MASPSICLLAALLALVSWQAIA. A disulfide bridge links Cys-32 with Cys-47. The Cupin type-1 domain occupies 62–212; it reads AMLDTPRKTN…AFQVEKGTID (151 aa). Asn-76 carries an N-linked (GlcNAc...) asparagine glycan. The Mn(2+) site is built by His-109, His-111, and Glu-116. An N-linked (GlcNAc...) asparagine glycan is attached at Asn-135. Residue His-157 participates in Mn(2+) binding.

It belongs to the germin family. Oligomer (believed to be a pentamer but probably hexamer).

It is found in the secreted. The protein resides in the extracellular space. It localises to the apoplast. Plays a role in broad-spectrum disease resistance. Probably has no oxalate oxidase activity even if the active site is conserved. This Oryza sativa subsp. japonica (Rice) protein is Germin-like protein 8-10 (GLP2).